We begin with the raw amino-acid sequence, 34 residues long: Photosystem I reaction center subunit XII (34 aa).

The chain crosses the membrane as a helical span at residues 11 to 31 (VAIAFVVALIAGIAALLLSTA).

Belongs to the PsaM family. The G.violaceus PSI reaction center is composed of one copy each of PsaA,B,C,D,E,F,L,M and Z, and forms trimeric complexes.

It is found in the cell inner membrane. This chain is Photosystem I reaction center subunit XII, found in Gloeobacter violaceus (strain ATCC 29082 / PCC 7421).